The primary structure comprises 148 residues: Nucleoside diphosphate kinase A (148 aa).

Lys9, Phe57, Arg85, Thr91, Arg102, and Asn112 together coordinate ATP. The Pros-phosphohistidine intermediate role is filled by His115.

The protein belongs to the NDK family. Mg(2+) serves as cofactor.

It carries out the reaction a 2'-deoxyribonucleoside 5'-diphosphate + ATP = a 2'-deoxyribonucleoside 5'-triphosphate + ADP. The enzyme catalyses a ribonucleoside 5'-diphosphate + ATP = a ribonucleoside 5'-triphosphate + ADP. Functionally, major role in the synthesis of nucleoside triphosphates other than ATP. The ATP gamma phosphate is transferred to the NDP beta phosphate via a ping-pong mechanism, using a phosphorylated active-site intermediate. In Flaveria bidentis (Coastal plain yellowtops), this protein is Nucleoside diphosphate kinase A.